A 182-amino-acid chain; its full sequence is Crossover junction endodeoxyribonuclease RuvC (182 aa).

Catalysis depends on residues Asp7, Glu69, and Asp141. Mg(2+) contacts are provided by Asp7, Glu69, and Asp141.

Belongs to the RuvC family. As to quaternary structure, homodimer which binds Holliday junction (HJ) DNA. The HJ becomes 2-fold symmetrical on binding to RuvC with unstacked arms; it has a different conformation from HJ DNA in complex with RuvA. In the full resolvosome a probable DNA-RuvA(4)-RuvB(12)-RuvC(2) complex forms which resolves the HJ. Mg(2+) serves as cofactor.

It is found in the cytoplasm. It carries out the reaction Endonucleolytic cleavage at a junction such as a reciprocal single-stranded crossover between two homologous DNA duplexes (Holliday junction).. Its function is as follows. The RuvA-RuvB-RuvC complex processes Holliday junction (HJ) DNA during genetic recombination and DNA repair. Endonuclease that resolves HJ intermediates. Cleaves cruciform DNA by making single-stranded nicks across the HJ at symmetrical positions within the homologous arms, yielding a 5'-phosphate and a 3'-hydroxyl group; requires a central core of homology in the junction. The consensus cleavage sequence is 5'-(A/T)TT(C/G)-3'. Cleavage occurs on the 3'-side of the TT dinucleotide at the point of strand exchange. HJ branch migration catalyzed by RuvA-RuvB allows RuvC to scan DNA until it finds its consensus sequence, where it cleaves and resolves the cruciform DNA. The sequence is that of Crossover junction endodeoxyribonuclease RuvC from Paracidovorax citrulli (strain AAC00-1) (Acidovorax citrulli).